We begin with the raw amino-acid sequence, 720 residues long: Glycine--tRNA ligase beta subunit (720 aa).

This sequence belongs to the class-II aminoacyl-tRNA synthetase family. In terms of assembly, tetramer of two alpha and two beta subunits.

The protein localises to the cytoplasm. The enzyme catalyses tRNA(Gly) + glycine + ATP = glycyl-tRNA(Gly) + AMP + diphosphate. The chain is Glycine--tRNA ligase beta subunit from Dinoroseobacter shibae (strain DSM 16493 / NCIMB 14021 / DFL 12).